A 327-amino-acid polypeptide reads, in one-letter code: Zinc transport protein ZntB (327 aa).

The Cytoplasmic segment spans residues 1-271; sequence MDVVAGKALQ…AMNRRTYTMS (271 aa). Residues 272–292 traverse the membrane as a helical segment; the sequence is LLAMVFLPTTFLTGLFGVNLG. Over 293-300 the chain is Periplasmic; it reads GIPGNTDS. A helical transmembrane segment spans residues 301–321; it reads FGFATFCMMLVVLVLGVAWWL. Residues 322 to 327 lie on the Cytoplasmic side of the membrane; that stretch reads KHSKWL.

It belongs to the CorA metal ion transporter (MIT) (TC 1.A.35) family.

The protein localises to the cell inner membrane. It catalyses the reaction Zn(2+)(out) + H(+)(out) = Zn(2+)(in) + H(+)(in). Zinc transporter. Acts as a Zn(2+):proton symporter, which likely mediates zinc ion uptake. This is Zinc transport protein ZntB from Yersinia enterocolitica serotype O:8 / biotype 1B (strain NCTC 13174 / 8081).